We begin with the raw amino-acid sequence, 57 residues long: Large ribosomal subunit protein bL32 (57 aa).

Belongs to the bacterial ribosomal protein bL32 family.

The protein is Large ribosomal subunit protein bL32 of Ureaplasma parvum serovar 3 (strain ATCC 27815 / 27 / NCTC 11736).